Consider the following 913-residue polypeptide: Eukaryotic translation initiation factor 3 subunit C (913 aa).

The disordered stretch occupies residues 1 to 44; the sequence is MSRFFTTGSDSESESSLSGEELVTKPVGGNYGKQPLLLSEDEED. The segment covering 8-21 has biased composition (low complexity); that stretch reads GSDSESESSLSGEE. A phosphoserine mark is found at serine 9, serine 11, serine 13, serine 15, serine 16, serine 18, and serine 39. Lysine 99 bears the N6-acetyllysine mark. Disordered regions lie at residues 157–301 and 522–542; these read TSYK…GGEW and QLTP…NEGE. Phosphoserine occurs at positions 166, 178, 181, and 182. Positions 166 to 190 are enriched in acidic residues; sequence SADEDAEKNEEDSEGSSDEDEDEDG. Residues 199–216 show a composition bias toward basic and acidic residues; it reads KKSEAPSGESRKFLKKMD. Positions 217 to 232 are enriched in acidic residues; that stretch reads DEDEDSEDSEDDEDWD. Over residues 261–278 the composition is skewed to basic and acidic residues; it reads PTTDEDKKAAEKKREDKA. Residues 522–531 are compositionally biased toward polar residues; that stretch reads QLTPPEGSSK. Threonine 524 bears the Phosphothreonine mark. Lysine 643 carries the post-translational modification N6-acetyllysine. The region spanning 673-849 is the PCI domain; it reads FHLHINLELL…QTVVMHRTEP (177 aa). The disordered stretch occupies residues 885-913; that stretch reads FRDQKDGYRKNEGYMRRGGYRQQQSQTAY. A compositionally biased stretch (basic and acidic residues) spans 886-899; that stretch reads RDQKDGYRKNEGYM. The residue at position 909 (serine 909) is a Phosphoserine.

This sequence belongs to the eIF-3 subunit C family. Component of the eukaryotic translation initiation factor 3 (eIF-3) complex, which is composed of 13 subunits: EIF3A, EIF3B, EIF3C, EIF3D, EIF3E, EIF3F, EIF3G, EIF3H, EIF3I, EIF3J, EIF3K, EIF3L and EIF3M. The eIF-3 complex appears to include 3 stable modules: module A is composed of EIF3A, EIF3B, EIF3G and EIF3I; module B is composed of EIF3F, EIF3H, and EIF3M; and module C is composed of EIF3C, EIF3D, EIF3E, EIF3K and EIF3L. EIF3C of module C binds EIF3B of module A and EIF3H of module B, thereby linking the three modules. EIF3J is a labile subunit that binds to the eIF-3 complex via EIF3B. The eIF-3 complex interacts with RPS6KB1 under conditions of nutrient depletion. Mitogenic stimulation leads to binding and activation of a complex composed of MTOR and RPTOR, leading to phosphorylation and release of RPS6KB1 and binding of EIF4B to eIF-3. Interacts with ALKBH4, IFIT1 and IFIT2. Interacts with BZW2/5MP1. In terms of processing, phosphorylated. Phosphorylation is enhanced upon serum stimulation.

It localises to the cytoplasm. Functionally, component of the eukaryotic translation initiation factor 3 (eIF-3) complex, which is required for several steps in the initiation of protein synthesis. The eIF-3 complex associates with the 40S ribosome and facilitates the recruitment of eIF-1, eIF-1A, eIF-2:GTP:methionyl-tRNAi and eIF-5 to form the 43S pre-initiation complex (43S PIC). The eIF-3 complex stimulates mRNA recruitment to the 43S PIC and scanning of the mRNA for AUG recognition. The eIF-3 complex is also required for disassembly and recycling of post-termination ribosomal complexes and subsequently prevents premature joining of the 40S and 60S ribosomal subunits prior to initiation. The eIF-3 complex specifically targets and initiates translation of a subset of mRNAs involved in cell proliferation, including cell cycling, differentiation and apoptosis, and uses different modes of RNA stem-loop binding to exert either translational activation or repression. This chain is Eukaryotic translation initiation factor 3 subunit C, found in Pongo abelii (Sumatran orangutan).